We begin with the raw amino-acid sequence, 145 residues long: Heat shock protein hsp-16.2 (145 aa).

The sHSP domain occupies 32–137 (VCRISPSESS…QGRSIPIQQA (106 aa)).

Belongs to the small heat shock protein (HSP20) family.

The chain is Heat shock protein hsp-16.2 from Caenorhabditis elegans.